A 264-amino-acid polypeptide reads, in one-letter code: Phosphonoacetaldehyde hydrolase (264 aa).

Asp-9 serves as the catalytic Nucleophile. 2 residues coordinate Mg(2+): Asp-9 and Ala-11. Lys-50 acts as the Schiff-base intermediate with substrate in catalysis. Asp-183 serves as a coordination point for Mg(2+).

The protein belongs to the HAD-like hydrolase superfamily. PhnX family. In terms of assembly, homodimer. Mg(2+) serves as cofactor.

The enzyme catalyses phosphonoacetaldehyde + H2O = acetaldehyde + phosphate + H(+). Functionally, involved in phosphonate degradation. The polypeptide is Phosphonoacetaldehyde hydrolase (phnX) (Bacillus cereus).